Reading from the N-terminus, the 636-residue chain is Threonine--tRNA ligase (636 aa).

Positions 1-63 (MNEINVTLPD…ADGARVEIIT (63 aa)) constitute a TGS domain. Positions 243-534 (DHRKLGRELD…LIEHFAGNFP (292 aa)) are catalytic. 3 residues coordinate Zn(2+): cysteine 335, histidine 386, and histidine 511.

The protein belongs to the class-II aminoacyl-tRNA synthetase family. As to quaternary structure, homodimer. It depends on Zn(2+) as a cofactor.

Its subcellular location is the cytoplasm. It catalyses the reaction tRNA(Thr) + L-threonine + ATP = L-threonyl-tRNA(Thr) + AMP + diphosphate + H(+). In terms of biological role, catalyzes the attachment of threonine to tRNA(Thr) in a two-step reaction: L-threonine is first activated by ATP to form Thr-AMP and then transferred to the acceptor end of tRNA(Thr). Also edits incorrectly charged L-seryl-tRNA(Thr). In Citrifermentans bemidjiense (strain ATCC BAA-1014 / DSM 16622 / JCM 12645 / Bem) (Geobacter bemidjiensis), this protein is Threonine--tRNA ligase.